The primary structure comprises 835 residues: Adhesion G protein-coupled receptor E5 (835 aa).

The first 20 residues, 1–20, serve as a signal peptide directing secretion; sequence MGGRVFLAFCVWLTLPGAET. Residues 21–552 are Extracellular-facing; sequence QDSRGCARWC…EDWKLTLITR (532 aa). In terms of domain architecture, EGF-like 1 spans 22–63; it reads DSRGCARWCPQNSSCVNATACRCNPGFSSFSEIITTPTETCD. Cystine bridges form between C26–C36, C30–C42, C44–C62, C68–C82, C76–C91, C93–C114, C120–C133, C127–C142, C144–C158, C164–C177, C171–C186, C188–C207, C213–C226, C220–C235, and C237–C256. 2 N-linked (GlcNAc...) asparagine glycosylation sites follow: N33 and N38. The 52-residue stretch at 64-115 folds into the EGF-like 2; calcium-binding domain; it reads DINECATPSKVSCGKFSDCWNTEGSYDCVCSPGYEPVSGAKTFKNESENTCQ. N108 is a glycosylation site (N-linked (GlcNAc...) asparagine). The EGF-like 3; calcium-binding domain occupies 116–159; sequence DVDECQQNPRLCKSYGTCVNTLGSYTCQCLPGFKFIPEDPKVCT. Residues 160–208 enclose the EGF-like 4; calcium-binding domain; it reads DVNECTSGQNPCHSSTHCLNNVGSYQCRCRPGWQPIPGSPNGPNNTVCE. N203 is a glycosylation site (N-linked (GlcNAc...) asparagine). The EGF-like 5; calcium-binding domain occupies 209–257; the sequence is DVDECSSGQHQCDSSTVCFNTVGSYSCRCRPGWKPRHGIPNNQKDTVCE. One can recognise a GAIN-B domain in the interval 349–543; the sequence is PFTYISPSNT…AILMAHYDVE (195 aa). N371, N406, N413, N453, and N520 each carry an N-linked (GlcNAc...) asparagine glycan. 2 cysteine pairs are disulfide-bonded: C495/C525 and C513/C527. Residues 495-543 are GPS; the sequence is CAFWKSDSDRGGHWATEGCQVLGSKNGSTTCQCSHLSSFAILMAHYDVE. The chain crosses the membrane as a helical span at residues 553–572; the sequence is VGLALSLFCLLLCILTFLLV. Residues 573–581 are Cytoplasmic-facing; the sequence is RPIQGSRTT. Residues 582 to 601 form a helical membrane-spanning segment; it reads IHLHLCICLFVGSTIFLAGI. Residues 602-620 are Extracellular-facing; sequence ENEGGQVGLRCRLVAGLLH. The chain crosses the membrane as a helical span at residues 621-642; sequence YCFLAAFCWMSLEGLELYFLVV. Topologically, residues 643-653 are cytoplasmic; the sequence is RVFQGQGLSTR. A helical membrane pass occupies residues 654–674; that stretch reads WLCLIGYGVPLLIVGVSAAIY. Topologically, residues 675-691 are extracellular; that stretch reads SKGYGRPRYCWLDFEQG. The helical transmembrane segment at 692 to 712 threads the bilayer; it reads FLWSFLGPVTFIILCNAVIFV. Over 713–739 the chain is Cytoplasmic; it reads TTVWKLTQKFSEINPDMKKLKKARALT. A helical transmembrane segment spans residues 740–760; that stretch reads ITAIAQLFLLGCTWVFGLFIF. Topologically, residues 761–766 are extracellular; that stretch reads DDRSLV. The chain crosses the membrane as a helical span at residues 767–789; that stretch reads LTYVFTILNCLQGAFLYLLHCLL. The Cytoplasmic segment spans residues 790-835; that stretch reads NKKVREEYRKWACLVAGGSKYSEFTSTTSGTGHNQTRALRASESGI. The segment covering 814–826 has biased composition (polar residues); the sequence is TSTTSGTGHNQTR. The segment at 814–835 is disordered; the sequence is TSTTSGTGHNQTRALRASESGI. S815 is subject to Phosphoserine. A Phosphothreonine modification is found at T816. S818 carries the post-translational modification Phosphoserine. T825 carries the post-translational modification Phosphothreonine. S831 and S833 each carry phosphoserine.

Belongs to the G-protein coupled receptor 2 family. LN-TM7 subfamily. As to quaternary structure, forms a heterodimer, consisting of a large extracellular region (alpha subunit) non-covalently linked to a seven-transmembrane moiety (beta subunit). Interacts with complement decay-accelerating factor (DAF). The largest isoform (isoform 1) interacts with chondroitin sulfate. Post-translationally, proteolytically cleaved into 2 subunits, an extracellular alpha subunit and a seven-transmembrane subunit. Broadly expressed, found on most hematopoietic cells, including activated lymphocytes, monocytes, macrophages, dendritic cells, and granulocytes. Expressed also abundantly by smooth muscle cells. Expressed in thyroid, colorectal, gastric, esophageal and pancreatic carcinomas too. Expression are increased under inflammatory conditions in the CNS of multiple sclerosis and in synovial tissue of patients with rheumatoid arthritis. Increased expression of CD97 in the synovium is accompanied by detectable levels of soluble CD97 in the synovial fluid.

It localises to the cell membrane. The protein resides in the secreted. The protein localises to the extracellular space. Functionally, receptor potentially involved in both adhesion and signaling processes early after leukocyte activation. Plays an essential role in leukocyte migration. This chain is Adhesion G protein-coupled receptor E5, found in Homo sapiens (Human).